A 307-amino-acid chain; its full sequence is Elongation factor Ts (307 aa).

The tract at residues 80–83 is involved in Mg(2+) ion dislocation from EF-Tu; sequence TDFV.

This sequence belongs to the EF-Ts family.

It localises to the cytoplasm. Functionally, associates with the EF-Tu.GDP complex and induces the exchange of GDP to GTP. It remains bound to the aminoacyl-tRNA.EF-Tu.GTP complex up to the GTP hydrolysis stage on the ribosome. The polypeptide is Elongation factor Ts (Xanthobacter autotrophicus (strain ATCC BAA-1158 / Py2)).